We begin with the raw amino-acid sequence, 396 residues long: Protein NDRG1-A (396 aa).

Positions 326 to 396 (RSRTGSAASS…NSPKSMEVSC (71 aa)) are disordered. The span at 327 to 340 (SRTGSAASSSSQDG) shows a compositional bias: low complexity. 4 repeat units span residues 340–349 (GNRSRSHTNE), 350–359 (GSRSRSHTGD), 360–369 (GNRSRAHTGD), and 370–379 (GNRSRSHTDT). Positions 340–379 (GNRSRSHTNEGSRSRSHTGDGNRSRAHTGDGNRSRSHTDT) are 4 X 10 AA tandem repeats of G-[NS]-R-S-R-[AS]-H-T-[DGN]-[DET]. Residues 346–377 (HTNEGSRSRSHTGDGNRSRAHTGDGNRSRSHT) are compositionally biased toward basic and acidic residues. Residues 378 to 390 (DTNNINSDQNSPK) show a composition bias toward polar residues.

Belongs to the NDRG family.

Functionally, may be involved in pronephros development, after specification of the pronephros. The chain is Protein NDRG1-A (ndrg1-a) from Xenopus laevis (African clawed frog).